We begin with the raw amino-acid sequence, 128 residues long: Large ribosomal subunit protein bL17 (128 aa).

Belongs to the bacterial ribosomal protein bL17 family. Part of the 50S ribosomal subunit. Contacts protein L32.

The chain is Large ribosomal subunit protein bL17 from Glaesserella parasuis serovar 5 (strain SH0165) (Haemophilus parasuis).